A 1023-amino-acid chain; its full sequence is Probable beta-glucosidase E (1023 aa).

Residues 1–51 are disordered; sequence MPKSYTPVHDSIPEEDHFSSDDESNFRLHRIDRSASRSQSPKENEGEPSIL. Residues 1–128 lie on the Cytoplasmic side of the membrane; it reads MPKSYTPVHD…AVYYSKTWWR (128 aa). A compositionally biased stretch (basic and acidic residues) spans 11-45; it reads SIPEEDHFSSDDESNFRLHRIDRSASRSQSPKENE. A helical; Signal-anchor for type II membrane protein transmembrane segment spans residues 129–149; it reads TLVVVIIALGLLVWGFLKYAS. The Extracellular segment spans residues 150–1023; the sequence is TRGDIWEEYD…NLPLGKPFDP (874 aa). N-linked (GlcNAc...) asparagine glycosylation is found at Asn-199 and Asn-387. Asp-415 is an active-site residue. 2 N-linked (GlcNAc...) asparagine glycosylation sites follow: Asn-458 and Asn-497. 2 disordered regions span residues 485-515 and 822-841; these read WESPAPDGDGGPNFSSWTDDEFGFRYPGSPG and NPSRLPAARPPDAVAPPSYD. The segment covering 827-838 has biased composition (low complexity); sequence PAARPPDAVAPP. N-linked (GlcNAc...) asparagine glycosylation is present at Asn-848. The interval 873–909 is disordered; that stretch reads ATTPPPPNPEASGSATDQKPHRTKPSDAGGGAGGNPS. N-linked (GlcNAc...) asparagine glycosylation is found at Asn-964 and Asn-979.

It belongs to the glycosyl hydrolase 3 family.

Its subcellular location is the cell membrane. The catalysed reaction is Hydrolysis of terminal, non-reducing beta-D-glucosyl residues with release of beta-D-glucose.. The protein operates within glycan metabolism; cellulose degradation. Beta-glucosidases are one of a number of cellulolytic enzymes involved in the degradation of cellulosic biomass. Catalyzes the last step releasing glucose from the inhibitory cellobiose. The sequence is that of Probable beta-glucosidase E (bglE) from Emericella nidulans (strain FGSC A4 / ATCC 38163 / CBS 112.46 / NRRL 194 / M139) (Aspergillus nidulans).